The following is a 656-amino-acid chain: CXXC-type zinc finger protein 1 (656 aa).

N-acetylmethionine is present on methionine 1. Acidic residues predominate over residues methionine 1–glycine 14. The disordered stretch occupies residues methionine 1–glutamate 20. Residues serine 6 and serine 19 each carry the phosphoserine modification. The PHD-type zinc finger occupies tyrosine 28 to lysine 76. Positions tyrosine 84–isoleucine 162 are disordered. The span at arginine 90–arginine 120 shows a compositional bias: basic and acidic residues. Residue serine 124 is modified to Phosphoserine. Residues glutamine 160–glutamine 209 form a CXXC-type zinc finger. Cysteine 169, cysteine 172, cysteine 175, cysteine 181, cysteine 184, cysteine 187, cysteine 203, and cysteine 208 together coordinate Zn(2+). Disordered regions lie at residues phenylalanine 219–aspartate 287 and glutamate 311–proline 373. Phosphoserine is present on serine 224. Position 227 is a phosphothreonine (threonine 227). Over residues leucine 239 to glutamine 249 the composition is skewed to low complexity. Lysine 250 participates in a covalent cross-link: Glycyl lysine isopeptide (Lys-Gly) (interchain with G-Cter in SUMO2). The segment covering arginine 321–glutamate 334 has biased composition (basic residues). Residues lysine 335 to tyrosine 345 are compositionally biased toward basic and acidic residues. A compositionally biased stretch (basic residues) spans lysine 346–tryptophan 358. Residues lysine 359–aspartate 368 show a composition bias toward basic and acidic residues. The stretch at alanine 422–glutamate 474 forms a coiled coil.

As to quaternary structure, component of the SET1 complex, at least composed of the catalytic subunit (SETD1A or SETD1B), WDR5, WDR82, RBBP5, ASH2L/ASH2, CXXC1/CFP1 HCFC1 and DPY30. Interacts with SETD1A. Interacts with ZNF335. Interacts with PRDM9; this interaction does not link PRDM9-activated recombination hotspot sites with DSB machinery and is not required for the hotspot recognition pathway. Interacts with histone H3K4me3. Post-translationally, may be regulated by proteolysis. As to expression, ubiquitous.

Its subcellular location is the nucleus speckle. It localises to the nucleus. In terms of biological role, transcriptional activator that exhibits a unique DNA binding specificity for CpG unmethylated motifs with a preference for CpGG. The polypeptide is CXXC-type zinc finger protein 1 (CXXC1) (Homo sapiens (Human)).